Reading from the N-terminus, the 476-residue chain is 2-(3-amino-3-carboxypropyl)histidine synthase subunit 2 (476 aa).

Positions 1-15 (MTESAPSAFFTTSTP) are enriched in polar residues. Residues 1–24 (MTESAPSAFFTTSTPADHVHEEES) form a disordered region. Residues Cys102, Cys123, and Cys347 each coordinate [4Fe-4S] cluster. The tract at residues 451–476 (DGVSTAEDSTKMGEGRSGIAQGYSGK) is disordered.

It belongs to the DPH1/DPH2 family. DPH2 subfamily. As to quaternary structure, component of the 2-(3-amino-3-carboxypropyl)histidine synthase complex composed of dph-1, dph-2, dph-3 and a NADH-dependent reductase. [4Fe-4S] cluster serves as cofactor.

Its pathway is protein modification; peptidyl-diphthamide biosynthesis. Required for the first step of diphthamide biosynthesis, a post-translational modification of histidine which occurs in elongation factor 2. Dph-1 and dph-2 transfer a 3-amino-3-carboxypropyl (ACP) group from S-adenosyl-L-methionine (SAM) to a histidine residue, the reaction is assisted by a reduction system comprising dph-3 and a NADH-dependent reductase. Facilitates the reduction of the catalytic iron-sulfur cluster found in the dph-1 subunit. This is 2-(3-amino-3-carboxypropyl)histidine synthase subunit 2 (dph-2) from Caenorhabditis elegans.